Reading from the N-terminus, the 402-residue chain is MFKLTSRLVTSRFAASSRLATARTIVLPRPHPSWISFQAKRFNSTGPNANDVSEIQTQLPSIDELTSSAPSLSASTSDLIANTTQTVGELSSHIGYLNSIGLAQTWYWPSDIIQHVLEAVHVYSGLPWWGTIAATTILIRCLMFPLYVKSSDTVARNSHIKPELDALNNKLMSTTDLQQGQLVAMQRKKLLSSHGIKNRWLAAPMLQIPIALGFFNALRHMANYPVDGFANQGVAWFTDLTQADPYLGLQVITAAVFISFTRLGGETGAQQFSSPMKRLFTILPIISIPATMNLSSAVVLYFAFNGAFSVLQTMILRNKWVRSKLKITEVAKPRTPIAGASPTENMGIFQSLKHNIQKARDQAERRQLMQDNEKKLQESFKEKRQNSKIKIVHKSNFINNKK.

The transit peptide at 1–42 (MFKLTSRLVTSRFAASSRLATARTIVLPRPHPSWISFQAKRF) directs the protein to the mitochondrion. Over 43 to 118 (NSTGPNANDV…PSDIIQHVLE (76 aa)) the chain is Mitochondrial intermembrane. Residues 119–139 (AVHVYSGLPWWGTIAATTILI) traverse the membrane as a helical segment. Over 140–199 (RCLMFPLYVKSSDTVARNSHIKPELDALNNKLMSTTDLQQGQLVAMQRKKLLSSHGIKNR) the chain is Mitochondrial matrix. A helical transmembrane segment spans residues 200 to 220 (WLAAPMLQIPIALGFFNALRH). The Mitochondrial intermembrane segment spans residues 221–239 (MANYPVDGFANQGVAWFTD). The chain crosses the membrane as a helical span at residues 240-260 (LTQADPYLGLQVITAAVFISF). Residues 261–275 (TRLGGETGAQQFSSP) are Mitochondrial matrix-facing. The chain crosses the membrane as a helical span at residues 276–292 (MKRLFTILPIISIPATM). Over 293 to 297 (NLSSA) the chain is Mitochondrial intermembrane. A helical membrane pass occupies residues 298–316 (VVLYFAFNGAFSVLQTMIL). Over 317–402 (RNKWVRSKLK…HKSNFINNKK (86 aa)) the chain is Mitochondrial matrix. The span at 366-385 (RQLMQDNEKKLQESFKEKRQ) shows a compositional bias: basic and acidic residues. Positions 366–386 (RQLMQDNEKKLQESFKEKRQN) are disordered.

The protein belongs to the OXA1/ALB3/YidC family. Interacts with the large ribosome subunit of mitochondrial ribosome. Interacts directly with MRP20. Interacts with OXA1.

It is found in the mitochondrion inner membrane. Functionally, mitochondrial inner membrane insertase that mediates the insertion of both mitochondrion-encoded precursors and nuclear-encoded proteins from the matrix into the inner membrane. Links mitoribosomes with the inner membrane. Forms pores capable of accommodating translocating protein segments. Essential for the activity and assembly of cytochrome c oxidase. Plays a central role in the translocation and export of the N-terminal part of the COX2 protein into the mitochondrial intermembrane space. The sequence is that of Mitochondrial inner membrane protein OXA1 from Saccharomyces cerevisiae (strain ATCC 204508 / S288c) (Baker's yeast).